Here is a 183-residue protein sequence, read N- to C-terminus: MSQSNPILRGLAITTAIAALSATGYAIYFDYQRRNSPQFRKVLRQRAKEQAKMEEQAKTHAKEVKLQKVTEFLSMELAKDPIPSDPSEREATFTTNVENGERLSMQQGKELEAASKFYKALTVYPQPADLLGIYQRSIPEAIYEYIILMIAILPPANVASFVKGVVGSKAESDAVAEANDIDD.

The Mitochondrial intermembrane portion of the chain corresponds to 1 to 8; that stretch reads MSQSNPIL. The chain crosses the membrane as a helical span at residues 9-28; that stretch reads RGLAITTAIAALSATGYAIY. The Cytoplasmic segment spans residues 29-183; it reads FDYQRRNSPQ…AVAEANDIDD (155 aa). The residue at position 172 (Ser-172) is a Phosphoserine.

The protein belongs to the Tom20 family. As to quaternary structure, forms part of the preprotein translocase complex of the outer mitochondrial membrane (TOM complex) which consists of at least 7 different proteins (TOM5, TOM6, TOM7, TOM20, TOM22, TOM40 and TOM70). In the complex, interacts with TOM22.

The protein resides in the mitochondrion outer membrane. Its function is as follows. Central component of the TOM (translocase of outer membrane) receptor complex responsible for the recognition and translocation of cytosolically synthesized mitochondrial preproteins. Together with TOM22 functions as the transit peptide receptor at the surface of the mitochondrion outer membrane and facilitates the movement of preproteins into the TOM40 translocation pore. The polypeptide is Mitochondrial import receptor subunit TOM20 (TOM20) (Saccharomyces cerevisiae (strain ATCC 204508 / S288c) (Baker's yeast)).